The chain runs to 151 residues: Large ribosomal subunit protein bL9 (151 aa).

It belongs to the bacterial ribosomal protein bL9 family.

Its function is as follows. Binds to the 23S rRNA. The sequence is that of Large ribosomal subunit protein bL9 from Prochlorococcus marinus (strain MIT 9301).